The sequence spans 253 residues: GTP cyclohydrolase III (253 aa).

Belongs to the archaeal-type GTP cyclohydrolase family.

It carries out the reaction GTP + 3 H2O = 2-amino-5-formylamino-6-(5-phospho-D-ribosylamino)pyrimidin-4(3H)-one + 2 phosphate + 2 H(+). Its function is as follows. Catalyzes the formation of 2-amino-5-formylamino-6-ribofuranosylamino-4(3H)-pyrimidinone ribonucleotide monophosphate and inorganic phosphate from GTP. Also has an independent pyrophosphate phosphohydrolase activity. This is GTP cyclohydrolase III from Natronomonas pharaonis (strain ATCC 35678 / DSM 2160 / CIP 103997 / JCM 8858 / NBRC 14720 / NCIMB 2260 / Gabara) (Halobacterium pharaonis).